The chain runs to 361 residues: uncharacterized protein (361 aa).

This is an uncharacterized protein from Escherichia coli (strain K12).